We begin with the raw amino-acid sequence, 135 residues long: Mini-ribonuclease 3 (135 aa).

The active site involves Asp-19.

Belongs to the MrnC RNase family. In terms of assembly, homodimer. Mg(2+) serves as cofactor.

The protein resides in the cytoplasm. Functionally, involved in correct processing of both the 5' and 3' ends of 23S rRNA precursor. Processes 30S rRNA precursor transcript even in absence of ribonuclease 3 (Rnc); Rnc processes 30S rRNA into smaller rRNA precursors. The polypeptide is Mini-ribonuclease 3 (Gloeobacter violaceus (strain ATCC 29082 / PCC 7421)).